Reading from the N-terminus, the 229-residue chain is 7-cyano-7-deazaguanine synthase (229 aa).

15–25 serves as a coordination point for ATP; sequence LSGGLDSTTCL. Residues Cys-192, Cys-202, Cys-205, and Cys-208 each contribute to the Zn(2+) site.

This sequence belongs to the QueC family. Zn(2+) serves as cofactor.

The enzyme catalyses 7-carboxy-7-deazaguanine + NH4(+) + ATP = 7-cyano-7-deazaguanine + ADP + phosphate + H2O + H(+). It participates in purine metabolism; 7-cyano-7-deazaguanine biosynthesis. Its function is as follows. Catalyzes the ATP-dependent conversion of 7-carboxy-7-deazaguanine (CDG) to 7-cyano-7-deazaguanine (preQ(0)). The polypeptide is 7-cyano-7-deazaguanine synthase (Acinetobacter baylyi (strain ATCC 33305 / BD413 / ADP1)).